We begin with the raw amino-acid sequence, 483 residues long: Regulatory protein ViaA (483 aa).

The protein belongs to the ViaA family. As to quaternary structure, homodimer. Interacts with RavA.

It localises to the cytoplasm. In terms of biological role, component of the RavA-ViaA chaperone complex, which may act on the membrane to optimize the function of some of the respiratory chains. ViaA stimulates the ATPase activity of RavA. The polypeptide is Regulatory protein ViaA (Escherichia coli O1:K1 / APEC).